Consider the following 335-residue polypeptide: tRNA-dihydrouridine(20/20a) synthase (335 aa).

Residues 19-21 (PMM) and Gln72 contribute to the FMN site. Residue Cys102 is the Proton donor of the active site. FMN is bound by residues Lys141, His173, 213-215 (NGG), and 235-236 (GR).

The protein belongs to the Dus family. DusA subfamily. The cofactor is FMN.

The enzyme catalyses 5,6-dihydrouridine(20) in tRNA + NADP(+) = uridine(20) in tRNA + NADPH + H(+). The catalysed reaction is 5,6-dihydrouridine(20) in tRNA + NAD(+) = uridine(20) in tRNA + NADH + H(+). It catalyses the reaction 5,6-dihydrouridine(20a) in tRNA + NADP(+) = uridine(20a) in tRNA + NADPH + H(+). It carries out the reaction 5,6-dihydrouridine(20a) in tRNA + NAD(+) = uridine(20a) in tRNA + NADH + H(+). Catalyzes the synthesis of 5,6-dihydrouridine (D), a modified base found in the D-loop of most tRNAs, via the reduction of the C5-C6 double bond in target uridines. Specifically modifies U20 and U20a in tRNAs. The sequence is that of tRNA-dihydrouridine(20/20a) synthase from Xanthomonas campestris pv. campestris (strain ATCC 33913 / DSM 3586 / NCPPB 528 / LMG 568 / P 25).